Consider the following 396-residue polypeptide: L-lactate dehydrogenase (396 aa).

The 380-residue stretch at 1 to 380 (MIISAASDYR…SGDSLVQELG (380 aa)) folds into the FMN hydroxy acid dehydrogenase domain. Tyr-24 provides a ligand contact to substrate. FMN-binding residues include Ser-106 and Gln-127. Tyr-129 is a binding site for substrate. Thr-155 contributes to the FMN binding site. A substrate-binding site is contributed by Arg-164. Lys-251 lines the FMN pocket. His-275 serves as the catalytic Proton acceptor. Arg-278 contributes to the substrate binding site. 306-330 (DSGIRNGLDVVRMIALGADTVLLGR) is an FMN binding site.

The protein belongs to the FMN-dependent alpha-hydroxy acid dehydrogenase family. FMN is required as a cofactor.

It is found in the cell inner membrane. The enzyme catalyses (S)-lactate + A = pyruvate + AH2. Functionally, catalyzes the conversion of L-lactate to pyruvate. Is coupled to the respiratory chain. The chain is L-lactate dehydrogenase from Salmonella paratyphi C (strain RKS4594).